Consider the following 560-residue polypeptide: Factor VII-activating protease (560 aa).

An N-terminal signal peptide occupies residues 1–23 (MFARMSDLHVLLLMALVGKTACG). A glycan (N-linked (GlcNAc...) asparagine) is linked at Asn-54. 3 EGF-like domains span residues 73–109 (QADPCQPNPCEHGGDCLVHGSTFTCSCLAPFSGNKCQ), 111–148 (VQNTCKDNPCGRGQCLITQSPPYYRCVCKHPYTGPSCS), and 150–188 (VVPVCRPNPCQNGATCSRHKRRSKFTCACPDQFKGKFCE). Intrachain disulfides connect Cys-77-Cys-88, Cys-82-Cys-97, Cys-99-Cys-108, Cys-115-Cys-125, Cys-120-Cys-136, Cys-138-Cys-147, Cys-154-Cys-165, Cys-159-Cys-176, Cys-178-Cys-187, Cys-194-Cys-276, Cys-215-Cys-257, Cys-246-Cys-271, Cys-301-Cys-435, Cys-347-Cys-363, Cys-355-Cys-424, Cys-447-Cys-515, Cys-477-Cys-493, and Cys-505-Cys-533. Residues 193–276 (DCYVGDGYSY…KWEYCDVSAC (84 aa)) form the Kringle domain. An N-linked (GlcNAc...) asparagine glycan is attached at Asn-207. The Peptidase S1 domain maps to 314–555 (IYGGFKSTAG…FLNWIKATIK (242 aa)). Residues His-362 and Asp-411 each act as charge relay system in the active site. Ser-509 serves as the catalytic Charge relay system.

It belongs to the peptidase S1 family. Heterodimer; disulfide-linked. Heterodimer of a 50 kDa heavy and a 27 kDa light chain linked by a disulfide bond. Post-translationally, proteolytic cleavage at Gly-23 or Met-27 can give rise to the 50 kDa heavy chain (HC) and cleavage at Arg-313 or Lys-319 can give rise to the 27 kDa light chain (LC). The HC can undergo further proteolytic cleavage giving rise to a 26 kDa fragment. The LC can undergo further proteolytic cleavage at Arg-313 leading to a 17-kDa fragment and at Arg-480 leading to a 8-kDa fragment. Ubiquitously expressed.

Its subcellular location is the secreted. Its function is as follows. Cleaves the alpha-chain at multiple sites and the beta-chain between 'Lys-53' and 'Lys-54' but not the gamma-chain of fibrinogen and therefore does not initiate the formation of the fibrin clot and does not cause the fibrinolysis directly. It does not cleave (activate) prothrombin and plasminogen but converts the inactive single chain urinary plasminogen activator (pro-urokinase) to the active two chain form. Activates coagulation factor VII. May function as a tumor suppressor negatively regulating cell proliferation and cell migration. This chain is Factor VII-activating protease, found in Homo sapiens (Human).